We begin with the raw amino-acid sequence, 303 residues long: Serine/threonine-protein phosphatase PP-X homolog 2 (303 aa).

The Mn(2+) site is built by Asp-51, His-53, Asp-79, and Asn-111. His-112 acts as the Proton donor in catalysis. Mn(2+) is bound by residues His-161 and His-235.

This sequence belongs to the PPP phosphatase family. PP-4 (PP-X) subfamily. Requires Mn(2+) as cofactor.

The catalysed reaction is O-phospho-L-seryl-[protein] + H2O = L-seryl-[protein] + phosphate. It carries out the reaction O-phospho-L-threonyl-[protein] + H2O = L-threonyl-[protein] + phosphate. The sequence is that of Serine/threonine-protein phosphatase PP-X homolog 2 (Ppx2) from Paramecium tetraurelia.